Consider the following 494-residue polypeptide: Aspartyl/glutamyl-tRNA(Asn/Gln) amidotransferase subunit B (494 aa).

The protein belongs to the GatB/GatE family. GatB subfamily. As to quaternary structure, heterotrimer of A, B and C subunits.

It catalyses the reaction L-glutamyl-tRNA(Gln) + L-glutamine + ATP + H2O = L-glutaminyl-tRNA(Gln) + L-glutamate + ADP + phosphate + H(+). The catalysed reaction is L-aspartyl-tRNA(Asn) + L-glutamine + ATP + H2O = L-asparaginyl-tRNA(Asn) + L-glutamate + ADP + phosphate + 2 H(+). In terms of biological role, allows the formation of correctly charged Asn-tRNA(Asn) or Gln-tRNA(Gln) through the transamidation of misacylated Asp-tRNA(Asn) or Glu-tRNA(Gln) in organisms which lack either or both of asparaginyl-tRNA or glutaminyl-tRNA synthetases. The reaction takes place in the presence of glutamine and ATP through an activated phospho-Asp-tRNA(Asn) or phospho-Glu-tRNA(Gln). This chain is Aspartyl/glutamyl-tRNA(Asn/Gln) amidotransferase subunit B, found in Synechococcus sp. (strain WH7803).